The primary structure comprises 585 residues: MTSINEQLTQKFQDALVKSFGEEFKDVDPQVNLARDLRHGDYQANIALPLAKKLGKNPREIAQIIINNLSLNTICENPTIGGPGFINLKLKSSYLETQLKSLYQNQRLGIEKVHNADKVIVDFSSPNIAKEMHVGHLRSTIIGDCIARTLEFLGYEVLRLNHVGDWGTQFGMLITYLKEVYPDALTQADVLEIGDLVNFYKQAKKRFDEDPKFQEAAREAVVKLQSGDEESRKAWQLLCDQSRREFQKIYDRLDVKLIERGESFYNPYLNDVIKALDEQGILEKDQGAQCVFLEGFTNKSGDPLPLIVQKSDGGYNYATTDLAALKYRIQEDKAKRIIYVTDAGQSNHFAQVFQVAKKANFLPDTVDVTHVPFGLVKGEDGKKLKTRSGETVKLKDLLDEAVNYARKDLENRLQAEDRKESEDFINHVAETVGISAVKYADLSQNRISDYIFSYDKMLALQGNTAPYMLYAYARIQSISREGNIDYENLGENIQILLKEDTEIELGKYLLQLNETIKEVEKSLLPNRLCDYLYELSKKFNRFYENCPVLKSDEPVKTSRLLLCDLTARTLKLGLSLLGISVLERM.

Positions Pro126–His136 match the 'HIGH' region motif.

Belongs to the class-I aminoacyl-tRNA synthetase family. Monomer.

Its subcellular location is the cytoplasm. It catalyses the reaction tRNA(Arg) + L-arginine + ATP = L-arginyl-tRNA(Arg) + AMP + diphosphate. The polypeptide is Arginine--tRNA ligase (Crocosphaera subtropica (strain ATCC 51142 / BH68) (Cyanothece sp. (strain ATCC 51142))).